A 494-amino-acid polypeptide reads, in one-letter code: Cytochrome P450 2C23 (494 aa).

S131 is modified (phosphoserine). N6-acetyllysine occurs at positions 253 and 379. Position 439 (C439) interacts with heme.

The protein belongs to the cytochrome P450 family. Heme serves as cofactor. As to expression, expressed in kidney and liver. Expressed in cortical tubules of kidney (at protein level).

Its subcellular location is the endoplasmic reticulum membrane. The protein localises to the microsome membrane. It carries out the reaction (5Z,8Z,11Z,14Z)-eicosatetraenoate + reduced [NADPH--hemoprotein reductase] + O2 = (8R,9S)-epoxy-(5Z,11Z,14Z)-eicosatrienoate + oxidized [NADPH--hemoprotein reductase] + H2O + H(+). The catalysed reaction is (5Z,8Z,11Z,14Z)-eicosatetraenoate + reduced [NADPH--hemoprotein reductase] + O2 = (11R,12S)-epoxy-(5Z,8Z,14Z)-eicosatrienoate + oxidized [NADPH--hemoprotein reductase] + H2O + H(+). It catalyses the reaction (5Z,8Z,11Z,14Z)-eicosatetraenoate + reduced [NADPH--hemoprotein reductase] + O2 = (11S,12R)-epoxy-(5Z,8Z,14Z)-eicosatrienoate + oxidized [NADPH--hemoprotein reductase] + H2O + H(+). The enzyme catalyses (5Z,8Z,11Z,14Z)-eicosatetraenoate + reduced [NADPH--hemoprotein reductase] + O2 = (14R,15S)-epoxy-(5Z,8Z,11Z)-eicosatrienoate + oxidized [NADPH--hemoprotein reductase] + H2O + H(+). It carries out the reaction (5Z,8Z,11Z,14Z)-eicosatetraenoate + reduced [NADPH--hemoprotein reductase] + O2 = (14S,15R)-epoxy-(5Z,8Z,11Z)-eicosatrienoate + oxidized [NADPH--hemoprotein reductase] + H2O + H(+). The catalysed reaction is (5Z,8Z,11Z,14Z,17Z)-eicosapentaenoate + reduced [NADPH--hemoprotein reductase] + O2 = 8,9-epoxy-(5Z,11Z,14Z,17Z)-eicosatetraenoate + oxidized [NADPH--hemoprotein reductase] + H2O + H(+). It catalyses the reaction (5Z,8Z,11Z,14Z,17Z)-eicosapentaenoate + reduced [NADPH--hemoprotein reductase] + O2 = 11,12-epoxy-(5Z,8Z,14Z,17Z)-eicosatetraenoate + oxidized [NADPH--hemoprotein reductase] + H2O + H(+). The enzyme catalyses (5Z,8Z,11Z,14Z,17Z)-eicosapentaenoate + reduced [NADPH--hemoprotein reductase] + O2 = 14,15-epoxy-(5Z,8Z,11Z,17Z)-eicosatetraenoate + oxidized [NADPH--hemoprotein reductase] + H2O + H(+). It carries out the reaction (5Z,8Z,11Z,14Z,17Z)-eicosapentaenoate + reduced [NADPH--hemoprotein reductase] + O2 = (17R,18S)-epoxy-(5Z,8Z,11Z,14Z)-eicosatetraenoate + oxidized [NADPH--hemoprotein reductase] + H2O + H(+). The catalysed reaction is (5Z,8Z,11Z,14Z,17Z)-eicosapentaenoate + reduced [NADPH--hemoprotein reductase] + O2 = (17S,18R)-epoxy-(5Z,8Z,11Z,14Z)-eicosatetraenoate + oxidized [NADPH--hemoprotein reductase] + H2O + H(+). It catalyses the reaction 20-hydroxy-(5Z,8Z,11Z,14Z)-eicosatetraenoate + reduced [NADPH--hemoprotein reductase] + O2 = 20-hydroxy-8,9-epoxy-(5Z,11Z,14Z)-eicosatrienoate + oxidized [NADPH--hemoprotein reductase] + H2O + H(+). The protein operates within lipid metabolism; arachidonate metabolism. A cytochrome P450 monooxygenase involved in polyunsaturated fatty acids (PUFAs) metabolism and signaling. Catalyzes preferentially the epoxidation of double bonds of PUFAs. Converts arachidonic acid (ARA, C20:4(n-6)) primarily to stereospecific products 8R,9S-, 11R,12S-, and 14S,15R-EET. Plays a major role in the formation of EETs and hydroxy-EETs (HEETs) in kidney. Via EETs may inhibit the epithelial sodium channels (ENaCs) in nephron segments, preventing excessive sodium absorption during high dietary salt intake. Participates in the formation of anti-inflammatory hydroxyepoxyeicosatrienoic acids (HEETs) by converting 20-hydroxyeicosatetraenoic acid (20-HETE) to 20,8,9-HEET, an activator of PPARA. Metabolizes eicosapentaenoic acid (EPA, C20:5(n-3)) to epoxyeicosatetraenoic acid (EETeTr) regioisomers, 8,9-, 11,12-, 14,15-, and 17,18-EETeTr, preferentially producing 17R,18S enantiomer. Mechanistically, uses molecular oxygen inserting one oxygen atom into a substrate, and reducing the second into a water molecule, with two electrons provided by NADPH via cytochrome P450 reductase (NADPH--hemoprotein reductase). The protein is Cytochrome P450 2C23 of Rattus norvegicus (Rat).